The sequence spans 654 residues: Peptide-N(4)-(N-acetyl-beta-glucosaminyl)asparagine amidase (654 aa).

Alanine 2 carries the post-translational modification N-acetylalanine. In terms of domain architecture, PUB spans 30-91 (EASKLLLTYA…EGETHLIFPK (62 aa)). The tract at residues 112–163 (RLDGSNKSHKVKSSQQPAASTQLPTTPSSNPSGLNQHTRNRQGQSSDPPSAS) is disordered. Residues 124–163 (SSQQPAASTQLPTTPSSNPSGLNQHTRNRQGQSSDPPSAS) are compositionally biased toward polar residues. Threonine 137 bears the Phosphothreonine mark. Zn(2+)-binding residues include cysteine 250, cysteine 253, cysteine 283, and cysteine 286. The active-site Nucleophile is cysteine 309. Catalysis depends on residues histidine 336 and aspartate 353. The PAW domain maps to 454–654 (ELGGRISGSV…LEIIIKFSDL (201 aa)).

Belongs to the transglutaminase-like superfamily. PNGase family. Component of a complex required to couple retrotranslocation, ubiquitination and deglycosylation composed of NGLY1, SAKS1, AMFR, VCP and RAD23B. Interacts with the proteasome components RAD23B and PSMC1. Interacts with directly with VCP. Interacts with DERL1, bringing it close to the endoplasmic reticulum membrane. Interacts with SAKS1. Requires Zn(2+) as cofactor.

It is found in the cytoplasm. The enzyme catalyses Hydrolysis of an N(4)-(acetyl-beta-D-glucosaminyl)asparagine residue in which the glucosamine residue may be further glycosylated, to yield a (substituted) N-acetyl-beta-D-glucosaminylamine and a peptide containing an aspartate residue.. Inhibited by Z-VAD-fmk, a well-known caspase inhibitor, which inhibits enzyme activity through covalent binding of the carbohydrate to the single Cys-306 residue. Its function is as follows. Specifically deglycosylates the denatured form of N-linked glycoproteins in the cytoplasm and assists their proteasome-mediated degradation. Cleaves the beta-aspartyl-glucosamine (GlcNAc) of the glycan and the amide side chain of Asn, converting Asn to Asp. Prefers proteins containing high-mannose over those bearing complex type oligosaccharides. Can recognize misfolded proteins in the endoplasmic reticulum that are exported to the cytosol to be destroyed and deglycosylate them, while it has no activity toward native proteins. Deglycosylation is a prerequisite for subsequent proteasome-mediated degradation of some, but not all, misfolded glycoproteins. The polypeptide is Peptide-N(4)-(N-acetyl-beta-glucosaminyl)asparagine amidase (NGLY1) (Homo sapiens (Human)).